Consider the following 455-residue polypeptide: Protein YmfN (455 aa).

The protein belongs to the phage terminase family.

The sequence is that of Protein YmfN (ymfN) from Escherichia coli (strain K12).